A 524-amino-acid chain; its full sequence is Germ cell-less protein-like 1 (524 aa).

The segment at 1–37 (MGALSSRVLRPAGRTEQPEPTPGAGGAARRSDAGEDA) is disordered. A Nuclear localization signal motif is present at residues 47–53 (GRKRKRS). Residues 63–83 (DSETDDDEDEGDEQQRLLNTP) form a disordered region. Serine 64 is modified (phosphoserine). The segment covering 65–74 (ETDDDEDEGD) has biased composition (acidic residues). Threonine 66 carries the phosphothreonine modification. A Nuclear localization signal motif is present at residues 83-89 (PRRKKLK). Residues 106–176 (SDIKICALGE…LYRDDVLIKP (71 aa)) enclose the BTB domain.

In terms of assembly, interacts with TMPO-Beta, TSG101 and TFDP2. Interacts with EMD. As to expression, ubiquitously expressed at low levels throughout development and in adult tissues.

It localises to the nucleus matrix. Functionally, possible function in spermatogenesis. Enhances the degradation of MDM2 and increases the amount of p53 probably by modulating the nucleocytoplasmic transport. In Mus musculus (Mouse), this protein is Germ cell-less protein-like 1 (Gmcl1).